The chain runs to 471 residues: Glutamate--tRNA ligase (471 aa).

The 'HIGH' region motif lies at 9–19 (PSPTGYLHVGG). Zn(2+) contacts are provided by Cys-98, Cys-100, Cys-125, and His-127. The short motif at 237–241 (KLSKR) is the 'KMSKS' region element. Residue Lys-240 participates in ATP binding.

Belongs to the class-I aminoacyl-tRNA synthetase family. Glutamate--tRNA ligase type 1 subfamily. As to quaternary structure, monomer. It depends on Zn(2+) as a cofactor.

It is found in the cytoplasm. The enzyme catalyses tRNA(Glu) + L-glutamate + ATP = L-glutamyl-tRNA(Glu) + AMP + diphosphate. In terms of biological role, catalyzes the attachment of glutamate to tRNA(Glu) in a two-step reaction: glutamate is first activated by ATP to form Glu-AMP and then transferred to the acceptor end of tRNA(Glu). The sequence is that of Glutamate--tRNA ligase from Salmonella paratyphi A (strain ATCC 9150 / SARB42).